A 278-amino-acid chain; its full sequence is Protoheme IX farnesyltransferase (278 aa).

Transmembrane regions (helical) follow at residues 12 to 32 (VIWLLILSSVVGYVYAAGTVD), 36 to 56 (LAALTAAATLAVGGSAAFNHY), 72 to 92 (PLPAGAIPPSNALVYSLALSA), 105 to 124 (LPGVFVALGWFFYAVVYTVW), 130 to 150 (WLNILGGGFAGNATFLGGYAL), 157 to 177 (LPAVLISFAIYLWIPSHIWAL), 204 to 224 (AIISALNIASAAYILWLYLVF), 228 to 248 (LPGLALVLAGVAGTVATSALA), and 257 to 277 (MWRMYKASSPILTLFLLALVF).

The protein belongs to the UbiA prenyltransferase family. Protoheme IX farnesyltransferase subfamily.

It is found in the cell membrane. It carries out the reaction heme b + (2E,6E)-farnesyl diphosphate + H2O = Fe(II)-heme o + diphosphate. It functions in the pathway porphyrin-containing compound metabolism; heme O biosynthesis; heme O from protoheme: step 1/1. Converts heme B (protoheme IX) to heme O by substitution of the vinyl group on carbon 2 of heme B porphyrin ring with a hydroxyethyl farnesyl side group. The chain is Protoheme IX farnesyltransferase from Pyrobaculum neutrophilum (strain DSM 2338 / JCM 9278 / NBRC 100436 / V24Sta) (Thermoproteus neutrophilus).